Consider the following 459-residue polypeptide: MPIPRLMCTQHPDTTVKITAAEEVDEAIVAFTAYGCDEVMVDYEGKATPYSQPKEVVMKAAKSELPLGEKFVITVRLPNPRLEEFDRAMLALEAAVVANYFSVKYMGVRAVKWVVLPMVEDVETMSLVRRMLKRKVEDYKAEAKVDVGNIEVIPLFEDAFVQLKAKALLGEVFKGEEVREVRLFLGKSDSAVKHGHLASALAIAYTLSRLGDVESELGLRIRPILGMGSPPFRGGLNNPRLAPMEVVQYAGYYTATIQSAVRYDVALEEFLKVREAILNGCCAPRQRAPDEVLHIVQEASARYRALVMKYADKVIEVARLVPSTRDRVSWTAYGRTLTGGERVVNMPRAIVYTSAWYATGLPPTLLDAPYLLELAKSDKLDLVLKVLPTYLKELEYDLEFFDRATAEKYLDGEIVKAVVELADYLGLEARPNPAYATLLRMPRNEANIIALGKYRKFLG.

It belongs to the PEPCase type 2 family. Homotetramer. It depends on Mg(2+) as a cofactor.

It carries out the reaction oxaloacetate + phosphate = phosphoenolpyruvate + hydrogencarbonate. Its function is as follows. Catalyzes the irreversible beta-carboxylation of phosphoenolpyruvate (PEP) to form oxaloacetate (OAA), a four-carbon dicarboxylic acid source for the tricarboxylic acid cycle. This Pyrobaculum calidifontis (strain DSM 21063 / JCM 11548 / VA1) protein is Phosphoenolpyruvate carboxylase.